A 154-amino-acid polypeptide reads, in one-letter code: Histone H2B type F-M (154 aa).

A compositionally biased stretch (low complexity) spans 1–18; that stretch reads MAAASAMAEASSETTSEE. The interval 1–61 is disordered; that stretch reads MAAASAMAEA…RGDSFGDSFT (61 aa). Basic residues predominate over residues 34 to 50; the sequence is QKQKRRGCRGSRRRHAN.

It belongs to the histone H2B family. As to quaternary structure, the nucleosome is a histone octamer containing two molecules each of H2A, H2B, H3 and H4 assembled in one H3-H4 heterotetramer and two H2A-H2B heterodimers. The octamer wraps approximately 147 bp of DNA.

The protein localises to the nucleus. The protein resides in the chromosome. Functionally, core component of nucleosome. Nucleosomes wrap and compact DNA into chromatin, limiting DNA accessibility to the cellular machineries which require DNA as a template. Histones thereby play a central role in transcription regulation, DNA repair, DNA replication and chromosomal stability. DNA accessibility is regulated via a complex set of post-translational modifications of histones, also called histone code, and nucleosome remodeling. This is Histone H2B type F-M from Homo sapiens (Human).